The sequence spans 315 residues: Neuroguidin (315 aa).

Position 2 is an N-acetylalanine (Ala-2). Positions 13-41 (SAVTLLKNLQEQVMAVTAQVKSLTQKVQA) form a coiled coil. Residues 41–174 (AGAYPTEKGL…KGVSKKYVPP (134 aa)) form a necessary for interaction with EIF4E region. 3 positions are modified to phosphoserine: Ser-121, Ser-142, and Ser-143. The tract at residues 124–169 (ENDPLRFKPHPSNMMSKLSSEDEEEDEAEDDQSEASGKKSVKGVSK) is disordered. Residues 144–156 (EDEEEDEAEDDQS) show a composition bias toward acidic residues. A coiled-coil region spans residues 181 to 205 (YDETEAEREKKRLERAKRRALSSSV). A phosphoserine mark is found at Ser-204 and Ser-214. A disordered region spans residues 277–315 (DISALTGGTVHLDEDQNPIKKRKKIPQKGRKKKGFRRRR). A compositionally biased stretch (basic residues) spans 295 to 315 (IKKRKKIPQKGRKKKGFRRRR).

The protein belongs to the SAS10 family. Part of the small subunit (SSU) processome, composed of more than 70 proteins and the RNA chaperone small nucleolar RNA (snoRNA) U3. Interacts with CPEB1 and EIF4E.

It is found in the nucleus. Its subcellular location is the nucleolus. The protein localises to the chromosome. It localises to the centromere. The protein resides in the cytoplasm. It is found in the cell projection. Its subcellular location is the axon. The protein localises to the dendrite. It localises to the filopodium. In terms of biological role, part of the small subunit (SSU) processome, first precursor of the small eukaryotic ribosomal subunit. During the assembly of the SSU processome in the nucleolus, many ribosome biogenesis factors, an RNA chaperone and ribosomal proteins associate with the nascent pre-rRNA and work in concert to generate RNA folding, modifications, rearrangements and cleavage as well as targeted degradation of pre-ribosomal RNA by the RNA exosome. Its dissociation from the complex determines the transition from state pre-A1 to state pre-A1*. Inhibits mRNA translation in a cytoplasmic polyadenylation element (CPE)-dependent manner. The sequence is that of Neuroguidin from Homo sapiens (Human).